The sequence spans 347 residues: 5-deoxyribose 1-phosphate isomerase (347 aa).

Substrate is bound by residues 48–50 (RGA), Arg-91, and Gln-198. Catalysis depends on Asp-239, which acts as the Proton donor. A substrate-binding site is contributed by 249 to 250 (NK).

Belongs to the EIF-2B alpha/beta/delta subunits family. DrdI subfamily.

The enzyme catalyses 5-deoxy-alpha-D-ribose 1-phosphate = 5-deoxy-D-ribulose 1-phosphate. It participates in carbohydrate degradation. In terms of biological role, catalyzes the isomerization of 5-deoxy-alpha-D-ribose 1-phosphate to 5-deoxy-D-ribulose 1-phosphate, as part of a 5-deoxyribose salvage pathway that recycles this toxic radical SAM enzyme by-product to mainstream metabolites. This is 5-deoxyribose 1-phosphate isomerase from Bacillus thuringiensis subsp. konkukian (strain 97-27).